A 274-amino-acid polypeptide reads, in one-letter code: Undecaprenyl-diphosphatase (274 aa).

Transmembrane regions (helical) follow at residues 9-29 (LEYLKFFLYGLIQGFTEFIPV), 47-67 (PGASLSATIQLGSVLAIAWYF), 95-115 (ILIGTIPIVLLGGSIKLFVPY), 120-140 (VLRSNLSIALVSFLMAFFMYL), 161-181 (LIGFFQAFAIFPGVSRSGITI), 197-217 (FSFLLGIPAISLAAIVEFISS), 224-244 (LGFFPLFVGLITTFVSSLLAI), and 254-274 (NGLKIFIIYRVIFGIVILLNL).

It belongs to the UppP family.

It localises to the cell inner membrane. The catalysed reaction is di-trans,octa-cis-undecaprenyl diphosphate + H2O = di-trans,octa-cis-undecaprenyl phosphate + phosphate + H(+). In terms of biological role, catalyzes the dephosphorylation of undecaprenyl diphosphate (UPP). Confers resistance to bacitracin. The chain is Undecaprenyl-diphosphatase from Prochlorococcus marinus (strain AS9601).